Here is a 178-residue protein sequence, read N- to C-terminus: ATP synthase subunit delta (178 aa).

This sequence belongs to the ATPase delta chain family. As to quaternary structure, F-type ATPases have 2 components, F(1) - the catalytic core - and F(0) - the membrane proton channel. F(1) has five subunits: alpha(3), beta(3), gamma(1), delta(1), epsilon(1). F(0) has three main subunits: a(1), b(2) and c(10-14). The alpha and beta chains form an alternating ring which encloses part of the gamma chain. F(1) is attached to F(0) by a central stalk formed by the gamma and epsilon chains, while a peripheral stalk is formed by the delta and b chains.

It localises to the cell membrane. In terms of biological role, f(1)F(0) ATP synthase produces ATP from ADP in the presence of a proton or sodium gradient. F-type ATPases consist of two structural domains, F(1) containing the extramembraneous catalytic core and F(0) containing the membrane proton channel, linked together by a central stalk and a peripheral stalk. During catalysis, ATP synthesis in the catalytic domain of F(1) is coupled via a rotary mechanism of the central stalk subunits to proton translocation. Functionally, this protein is part of the stalk that links CF(0) to CF(1). It either transmits conformational changes from CF(0) to CF(1) or is implicated in proton conduction. This Streptococcus agalactiae serotype Ia (strain ATCC 27591 / A909 / CDC SS700) protein is ATP synthase subunit delta.